Reading from the N-terminus, the 307-residue chain is Pseudouridine-5'-phosphate glycosidase (307 aa).

E28 serves as the catalytic Proton donor. K89 and V109 together coordinate substrate. Residue D141 coordinates Mn(2+). Position 143-145 (143-145 (SAD)) interacts with substrate. Residue K162 is the Nucleophile of the active site.

The protein belongs to the pseudouridine-5'-phosphate glycosidase family. Homotrimer. Requires Mn(2+) as cofactor.

The enzyme catalyses D-ribose 5-phosphate + uracil = psi-UMP + H2O. Its function is as follows. Catalyzes the reversible cleavage of pseudouridine 5'-phosphate (PsiMP) to ribose 5-phosphate and uracil. Functions biologically in the cleavage direction, as part of a pseudouridine degradation pathway. The sequence is that of Pseudouridine-5'-phosphate glycosidase from Alkaliphilus metalliredigens (strain QYMF).